Reading from the N-terminus, the 189-residue chain is Mu-like prophage FluMu protein gp27 (189 aa).

To phage Mu protein gp27.

This is Mu-like prophage FluMu protein gp27 from Haemophilus influenzae (strain ATCC 51907 / DSM 11121 / KW20 / Rd).